Consider the following 621-residue polypeptide: MSHVLVNVAWPYANGPRHIGHVAGFGVPSDVYARYERMKGNDVLMVSGTDEHGTPILVEAEKEGLTAQELANRYNRVIAKDLCDLGLSYDLFTRTTTGNHEHVVQEMFKQCLENGYIYKGTQQVAISPSTGRTLPDRYIEGECPICHAEGARGDQCDACGNELDPDELINPVSKINGETPRFEQTEHYFLDLPALAEANKAWLETRKGWRTNVINFSLGLFKEVKPRAITRDIDWGIPVPVKGWIDNPNKKLYVWFDAVIGYLSASIEWARRQGDPEKWREWWNDPACPAYYFMGKDNITFHSQIWPSEMLAYNGKGSKGGETGPMGPLNLPEQVVASEFMTMEGKKFSSSRGIVIYVKDILARYPVDAVRYYISVAGPESSDSDFTWAEFVRHNNEELASSWGNLVNRVANLINKNFGEIPPLDEDSMTNEDRGLLEEASAAFDVVGSSIETHHQKHALSEAMRVVGDINKYISATEPWKIKDDQARLGTVLHVAAQAVSDANHLLAPFLPHSAQKVWEALGGTGTFSPLPELKEVEDLDKPGFTYPIITGDYELGVNVHPWKSEAIEVGAMVPKPAPIFAKIPTEAVEEELARFDEALAARRAAEAERLAAEKAKLAAE.

Positions 11–21 (PYANGPRHIGH) match the 'HIGH' region motif. Cysteine 143, cysteine 146, cysteine 156, and cysteine 159 together coordinate Zn(2+). The 'KMSKS' region motif lies at 347-351 (KFSSS). An ATP-binding site is contributed by serine 350.

This sequence belongs to the class-I aminoacyl-tRNA synthetase family. MetG type 1 subfamily. Monomer. It depends on Zn(2+) as a cofactor.

Its subcellular location is the cytoplasm. It carries out the reaction tRNA(Met) + L-methionine + ATP = L-methionyl-tRNA(Met) + AMP + diphosphate. Is required not only for elongation of protein synthesis but also for the initiation of all mRNA translation through initiator tRNA(fMet) aminoacylation. The protein is Methionine--tRNA ligase of Bifidobacterium longum (strain NCC 2705).